The primary structure comprises 562 residues: F-box and WD repeat domain-containing 11-A (562 aa).

The segment at 87–136 (GSFDKEKDLCIQLFDQWSESDQVEFVEHLIARMCHYQHGHINSYLKPMLQ) is homodimerization domain D. The 39-residue stretch at 149 to 187 (DHIAENILSFLDARSLCSAELVCREWQRVISDGMLWKKL) folds into the F-box domain. 7 WD repeats span residues 256 to 295 (RSEN…CLKV), 296 to 335 (LTGH…VLNT), 336 to 375 (LIHH…DISL), 379 to 418 (LVGH…FVRT), 419 to 458 (LNGH…CLRV), 459 to 491 (LEGH…WDLQ), and 508 to 538 (LVEH…LIWD).

In terms of assembly, self-associates. Component of the SCF(FBXW11) complex.

Its subcellular location is the cytoplasm. The protein localises to the nucleus. It participates in protein modification; protein ubiquitination. Substrate recognition component of a SCF (SKP1-CUL1-F-box protein) E3 ubiquitin-protein ligase complex which mediates the ubiquitination and subsequent proteasomal degradation of target proteins. Probably recognizes and binds to phosphorylated target proteins: the interaction with substrates requires the phosphorylation of the two serine residues in the substrates' destruction motif D-S-G-X(2,3,4)-S. SCF(FBXW11) mediates the ubiquitination of phosphorylated CTNNB1 and participates in Wnt signaling regulation. Participates in Wnt signaling regulation, and plays a role in eye and jaw development. SCF(FBXW11) plays a key role in NF-kappa-B activation by mediating ubiquitination of phosphorylated NFKBIA, leading to its degradation by the proteasome, thereby allowing the associated NF-kappa-B complex to translocate into the nucleus and to activate transcription. This chain is F-box and WD repeat domain-containing 11-A, found in Danio rerio (Zebrafish).